The sequence spans 402 residues: Putative nickel insertion protein (402 aa).

It belongs to the LarC family.

The polypeptide is Putative nickel insertion protein (Synechococcus elongatus (strain ATCC 33912 / PCC 7942 / FACHB-805) (Anacystis nidulans R2)).